The chain runs to 1062 residues: Roc-COR-CHAT protease (1062 aa).

LRR repeat units follow at residues 70 to 94 (LAGLQGLYLAENDFSSLQLPGHLQQ), 95 to 116 (LRLLHLADNKELKTLEFAGSMP), 115 to 141 (MPLLEEIDLSDSGIQTLQLPACPALQK), 142 to 159 (LDVSRSKLEAFSFASACP), 160 to 180 (ALWWLDLSGNGELRKLKMPAG), 181 to 203 (FKALQYLYLYKSGIQELQINGKL), 204 to 226 (PKLVVLDLEGNQLKQWPEKLLLP), and 228 to 249 (GLETLYLEGNPIENIPETIRGS). Residues 470 to 660 (DWLGVMEELQ…GLMWKDNVVF (191 aa)) enclose the COR domain. The interval 836–856 (ERDNDHTGLSDSSDQEDETFT) is disordered. Catalysis depends on residues histidine 931 and cysteine 980.

Functionally, a dedicated protease for substrate gasdermin bGSDM; cleaves the bGSDM precursor, releasing the pore-forming moiety, which integrates into the membrane and triggers cell death. Probably involved in defense against bacteriophages. Expression of bGSDM and this neighboring protease is highly toxic in E.coli. The protein is Roc-COR-CHAT protease of Unknown prokaryotic organism.